The primary structure comprises 489 residues: Glutamyl-tRNA(Gln) amidotransferase subunit A (489 aa).

Active-site charge relay system residues include lysine 77 and serine 157. Serine 181 (acyl-ester intermediate) is an active-site residue.

Belongs to the amidase family. GatA subfamily. In terms of assembly, heterotrimer of A, B and C subunits.

The catalysed reaction is L-glutamyl-tRNA(Gln) + L-glutamine + ATP + H2O = L-glutaminyl-tRNA(Gln) + L-glutamate + ADP + phosphate + H(+). Allows the formation of correctly charged Gln-tRNA(Gln) through the transamidation of misacylated Glu-tRNA(Gln) in organisms which lack glutaminyl-tRNA synthetase. The reaction takes place in the presence of glutamine and ATP through an activated gamma-phospho-Glu-tRNA(Gln). This chain is Glutamyl-tRNA(Gln) amidotransferase subunit A, found in Caulobacter vibrioides (strain ATCC 19089 / CIP 103742 / CB 15) (Caulobacter crescentus).